A 257-amino-acid polypeptide reads, in one-letter code: ABC transporter ATP-binding protein YxdL (257 aa).

Residues 5-243 (LEVKHINKTY…FYEQILDVLS (239 aa)) enclose the ABC transporter domain. Residue 40–47 (GPSGSGKT) coordinates ATP.

Belongs to the ABC transporter superfamily. As to quaternary structure, the complex is composed of two ATP-binding proteins (YxdL) and two transmembrane proteins (YxdM).

Functionally, part of the ABC transporter complex YxdLM which could be involved in peptide resistance. Responsible for energy coupling to the transport system. This chain is ABC transporter ATP-binding protein YxdL (yxdL), found in Bacillus subtilis (strain 168).